We begin with the raw amino-acid sequence, 515 residues long: Fibril protein (515 aa).

At Met-1 the chain carries Blocked amino end (Met). Helical regions lie at residues 21–34, 206–228, 357–376, and 426–440; these read VKKYWWKNCVIQHV, HKFKMYETVNTLKYLLRRLFNLL, KIETVETVANEIAAAIAEKC, and SNEFLKYLNEALKDV.

It localises to the cytoplasm. Its subcellular location is the cytoskeleton. Its function is as follows. Acts as a cytoskeletal structure involved in the shape and motility of spiroplasmas. This Spiroplasma citri protein is Fibril protein.